The primary structure comprises 160 residues: uncharacterized protein (160 aa).

A helical membrane pass occupies residues 47-67 (LLGGFANVAAILTPLVAVLAY).

It localises to the membrane. This is an uncharacterized protein from Sinorhizobium fredii (strain NBRC 101917 / NGR234).